Reading from the N-terminus, the 227-residue chain is Agamous-like MADS-box protein AGL8 homolog (227 aa).

The MADS-box domain occupies 3 to 57 (RGRVQLKRIENKINRQVTFSKRRSGLLKKAHEISVLCDAEVGLIVFSTKGKLFEY). The K-box domain occupies 88-178 (PVSWTLEHRK…SKKVKEREKS (91 aa)).

Flower specific.

The protein resides in the nucleus. Functionally, probable transcription factor. The polypeptide is Agamous-like MADS-box protein AGL8 homolog (TDR4) (Solanum lycopersicum (Tomato)).